A 409-amino-acid polypeptide reads, in one-letter code: NADH-quinone oxidoreductase subunit D (409 aa).

It belongs to the complex I 49 kDa subunit family. In terms of assembly, NDH-1 is composed of 14 different subunits. Subunits NuoB, C, D, E, F, and G constitute the peripheral sector of the complex.

It is found in the cell inner membrane. It carries out the reaction a quinone + NADH + 5 H(+)(in) = a quinol + NAD(+) + 4 H(+)(out). In terms of biological role, NDH-1 shuttles electrons from NADH, via FMN and iron-sulfur (Fe-S) centers, to quinones in the respiratory chain. The immediate electron acceptor for the enzyme in this species is believed to be ubiquinone. Couples the redox reaction to proton translocation (for every two electrons transferred, four hydrogen ions are translocated across the cytoplasmic membrane), and thus conserves the redox energy in a proton gradient. The protein is NADH-quinone oxidoreductase subunit D of Helicobacter pylori (strain HPAG1).